A 324-amino-acid chain; its full sequence is HTH-type transcriptional regulator CysB (324 aa).

One can recognise an HTH lysR-type domain in the interval 1–59 (MKLQQLRYIVEVVNHNLNVSSTAEGLYTSQPGISKQVRMLEDELGIQIFARSGKHLTQV). A DNA-binding region (H-T-H motif) is located at residues 19 to 38 (VSSTAEGLYTSQPGISKQVR).

This sequence belongs to the LysR transcriptional regulatory family. Homotetramer.

The protein resides in the cytoplasm. This protein is a positive regulator of gene expression for the cysteine regulon, a system of 10 or more loci involved in the biosynthesis of L-cysteine from inorganic sulfate. The inducer for CysB is N-acetylserine. CysB inhibits its own transcription. This is HTH-type transcriptional regulator CysB (cysB) from Salmonella typhimurium (strain LT2 / SGSC1412 / ATCC 700720).